We begin with the raw amino-acid sequence, 282 residues long: Para-Rep C2 (282 aa).

The region spanning 1–99 is the CRESS-DNA virus Rep endonuclease domain; sequence MASKRWCFTL…ETLIAEIGAP (99 aa). The short motif at 7-10 is the RCR-1 element; sequence CFTL. Positions 38 and 47 each coordinate a divalent metal cation. An RCR-2 motif is present at residues 47–49; the sequence is HLQ. A Nuclear localization signal motif is present at residues 56-77; it reads KLIRLGGLKKKFGSIAHWEIAK. Tyrosine 86 functions as the For DNA cleavage activity in the catalytic mechanism. Positions 86–89 match the RCR-3 motif; that stretch reads YCTK. Residues 99–105 carry the Nuclear localization signal motif; that stretch reads PVKKGSN. 174–182 serves as a coordination point for ATP; sequence GPDGGEGKS.

It belongs to the nanoviridea/circoviridae replication-associated protein family. Homooligomer (Potential). Rep binds to repeated DNA motifs (iterons). The cofactor is Mg(2+). It depends on Mn(2+) as a cofactor.

The protein localises to the host nucleus. It catalyses the reaction ATP + H2O = ADP + phosphate + H(+). Initiates and terminates the replication only of its own subviral DNA molecule. The closed circular ssDNA genome is first converted to a superhelical dsDNA. Rep binds a specific hairpin at the genome origin of replication. Introduces an endonucleolytic nick within the intergenic region of the genome, thereby initiating the rolling circle replication (RCR). Following cleavage, binds covalently to the 5'-phosphate of DNA as a tyrosyl ester. The cleavage gives rise to a free 3'-OH that serves as a primer for the cellular DNA polymerase. The polymerase synthesizes the (+) strand DNA by rolling circle mechanism. After one round of replication, a Rep-catalyzed nucleotidyl transfer reaction releases a circular single-stranded virus genome, thereby terminating the replication. Displays origin-specific DNA cleavage, nucleotidyl transferase, ATPase and helicase activities. This Milk vetch dwarf C2 alphasatellite (MVDC2A) protein is Para-Rep C2 (C2).